The following is a 388-amino-acid chain: Succinate--CoA ligase [ADP-forming] subunit beta (388 aa).

Positions 9-244 (KQLFAEYGLP…PSQEDEREAH (236 aa)) constitute an ATP-grasp domain. Residues lysine 46, 53–55 (GRG), glutamate 99, threonine 102, and glutamate 107 each bind ATP. Residues asparagine 199 and aspartate 213 each coordinate Mg(2+). Residues asparagine 264 and 321 to 323 (GIV) each bind substrate.

Belongs to the succinate/malate CoA ligase beta subunit family. Heterotetramer of two alpha and two beta subunits. Requires Mg(2+) as cofactor.

The enzyme catalyses succinate + ATP + CoA = succinyl-CoA + ADP + phosphate. It carries out the reaction GTP + succinate + CoA = succinyl-CoA + GDP + phosphate. Its pathway is carbohydrate metabolism; tricarboxylic acid cycle; succinate from succinyl-CoA (ligase route): step 1/1. Succinyl-CoA synthetase functions in the citric acid cycle (TCA), coupling the hydrolysis of succinyl-CoA to the synthesis of either ATP or GTP and thus represents the only step of substrate-level phosphorylation in the TCA. The beta subunit provides nucleotide specificity of the enzyme and binds the substrate succinate, while the binding sites for coenzyme A and phosphate are found in the alpha subunit. This chain is Succinate--CoA ligase [ADP-forming] subunit beta, found in Saccharophagus degradans (strain 2-40 / ATCC 43961 / DSM 17024).